The chain runs to 1894 residues: Plexin-A2 (1894 aa).

The first 34 residues, 1 to 34 (MEQRRPWPRALEVDSRSVVLLSVVWVLLAPPAAG), serve as a signal peptide directing secretion. A Sema domain is found at 35–508 (MPQFSTFHSE…SERQVTRVPV (474 aa)). Over 35–1237 (MPQFSTFHSE…VISDSLLTLP (1203 aa)) the chain is Extracellular. N-linked (GlcNAc...) asparagine glycans are attached at residues asparagine 76 and asparagine 91. 10 cysteine pairs are disulfide-bonded: cysteine 94-cysteine 103, cysteine 129-cysteine 137, cysteine 284-cysteine 405, cysteine 300-cysteine 356, cysteine 374-cysteine 393, cysteine 511-cysteine 528, cysteine 517-cysteine 559, cysteine 520-cysteine 537, cysteine 531-cysteine 543, and cysteine 594-cysteine 613. The N-linked (GlcNAc...) asparagine glycan is linked to asparagine 327. N-linked (GlcNAc...) asparagine glycans are attached at residues asparagine 598, asparagine 696, and asparagine 756. 4 IPT/TIG domains span residues 858-951 (PQIT…QYTF), 954-1037 (PSVL…QFEY), 1041-1139 (PRVQ…KFIY), and 1143-1228 (PTFE…SVSV). Asparagine 1205 carries N-linked (GlcNAc...) asparagine glycosylation. A helical transmembrane segment spans residues 1238 to 1258 (AIVSIAAGGSLLLIIVIIVLI). Residues 1259–1894 (AYKRKSREND…QLINAMSIES (636 aa)) are Cytoplasmic-facing. The stretch at 1261–1310 (KRKSRENDLTLKRLQMQMDNLESRVALECKEAFAELQTDINELTSDLDRS) forms a coiled coil. Residue serine 1612 is modified to Phosphoserine.

This sequence belongs to the plexin family. As to quaternary structure, homodimer. The PLXNA2 homodimer interacts with a SEMA6A homodimer, giving rise to a heterotetramer. Interacts directly with NRP1 and NRP2. Interacts with RND1. In terms of tissue distribution, detected in fetal brain.

The protein localises to the cell membrane. Its function is as follows. Coreceptor for SEMA3A and SEMA6A. Necessary for signaling by SEMA6A and class 3 semaphorins and subsequent remodeling of the cytoskeleton. Plays a role in axon guidance, invasive growth and cell migration. Class 3 semaphorins bind to a complex composed of a neuropilin and a plexin. The plexin modulates the affinity of the complex for specific semaphorins, and its cytoplasmic domain is required for the activation of down-stream signaling events in the cytoplasm. This is Plexin-A2 (PLXNA2) from Homo sapiens (Human).